The sequence spans 649 residues: Threonine--tRNA ligase (649 aa).

The TGS domain occupies 1–60; that stretch reads MHVVLPDGKQLELPMGATALDAASAIGPRLAQDALAATANGELVDLMTPLPDGASITLIT. A catalytic region spans residues 248–544; that stretch reads DHRKLGRELE…LIEHYAGDFP (297 aa). Zn(2+)-binding residues include Cys-341, His-392, and His-521.

This sequence belongs to the class-II aminoacyl-tRNA synthetase family. In terms of assembly, homodimer. Zn(2+) serves as cofactor.

It localises to the cytoplasm. It carries out the reaction tRNA(Thr) + L-threonine + ATP = L-threonyl-tRNA(Thr) + AMP + diphosphate + H(+). Its function is as follows. Catalyzes the attachment of threonine to tRNA(Thr) in a two-step reaction: L-threonine is first activated by ATP to form Thr-AMP and then transferred to the acceptor end of tRNA(Thr). Also edits incorrectly charged L-seryl-tRNA(Thr). This chain is Threonine--tRNA ligase, found in Deinococcus deserti (strain DSM 17065 / CIP 109153 / LMG 22923 / VCD115).